We begin with the raw amino-acid sequence, 49 residues long: MRVNITLEHKESGERLYLTQKNKRNTPDKLELKKYSKKLRKHVIFKEVK.

It belongs to the bacterial ribosomal protein bL33 family.

This chain is Large ribosomal subunit protein bL33B (rpmG2), found in Lactococcus lactis subsp. cremoris (Streptococcus cremoris).